Here is a 458-residue protein sequence, read N- to C-terminus: V-type ATP synthase beta chain (458 aa).

This sequence belongs to the ATPase alpha/beta chains family.

In terms of biological role, produces ATP from ADP in the presence of a proton gradient across the membrane. The V-type beta chain is a regulatory subunit. The polypeptide is V-type ATP synthase beta chain (Fusobacterium nucleatum subsp. nucleatum (strain ATCC 25586 / DSM 15643 / BCRC 10681 / CIP 101130 / JCM 8532 / KCTC 2640 / LMG 13131 / VPI 4355)).